Consider the following 166-residue polypeptide: MNQLQQLQNPGESPPVHPFVAPLSYLLGTWRGQGEGEYPTIPSFRYGEEIRFSHSGKPVIAYTQKTWKLESGAPMHAESGYFRPRPDGSIEVVIAQSTGLVEVQKGTYNVDEQSIKLKSDLVGNASKVKEISREFELVDGKLSYVVRMSTTTNPLQPHLKAILDKL.

The GXWXGXG motif lies at 28-34 (GTWRGQG). Heme b-binding residues include threonine 40 and histidine 158.

It belongs to the nitrobindin family. As to quaternary structure, homodimer. Heme b serves as cofactor.

The protein resides in the cytoplasm. The catalysed reaction is peroxynitrite = nitrate. Its pathway is nitrogen metabolism. Functionally, heme-binding protein able to scavenge peroxynitrite and to protect free L-tyrosine against peroxynitrite-mediated nitration, by acting as a peroxynitrite isomerase that converts peroxynitrite to nitrate. Therefore, this protein likely plays a role in peroxynitrite sensing and in the detoxification of reactive nitrogen and oxygen species (RNS and ROS, respectively). Is able to bind nitric oxide (NO) in vitro, but may act as a sensor of peroxynitrite levels in vivo. This chain is Peroxynitrite isomerase Rv2717c, found in Arabidopsis thaliana (Mouse-ear cress).